A 214-amino-acid chain; its full sequence is N-(5'-phosphoribosyl)anthranilate isomerase (214 aa).

The protein belongs to the TrpF family.

It carries out the reaction N-(5-phospho-beta-D-ribosyl)anthranilate = 1-(2-carboxyphenylamino)-1-deoxy-D-ribulose 5-phosphate. It participates in amino-acid biosynthesis; L-tryptophan biosynthesis; L-tryptophan from chorismate: step 3/5. This is N-(5'-phosphoribosyl)anthranilate isomerase from Halorubrum lacusprofundi (strain ATCC 49239 / DSM 5036 / JCM 8891 / ACAM 34).